The primary structure comprises 2527 residues: Leucine-rich repeat serine/threonine-protein kinase 2 (2527 aa).

Positions 1 to 969 are required for RAB29-mediated activation; that stretch reads MASGSCQGCE…RSSKLQSHMR (969 aa). Residues 319-348 are a coiled coil; it reads LTETIFLNQDLEEKNENQENDDEGEEDKLF. A phosphoserine mark is found at serine 910, serine 935, serine 955, and serine 973. 13 LRR repeats span residues 983–1004, 1012–1033, 1036–1057, 1059–1080, 1084–1105, 1108–1129, 1130–1150, 1156–1171, 1174–1196, 1197–1218, 1221–1245, 1246–1267, and 1269–1291; these read YITS…SQKC, HLEK…LCET, SLTH…LLKM, CIAN…DPTV, TLKQ…LTDV, KLEQ…LRLK, ELKI…NFLE, ESFS…MPFL, SMTI…LNLP, HLRS…AHWK, NLRE…YLWS, RVEK…IGCL, and NLTS…MGKL. A Phosphoserine; by autocatalysis modification is found at serine 1292. The region spanning 1328-1511 is the Roc domain; sequence KAVPYNRMKL…KTIINESLNF (184 aa). Position 1341–1348 (1341–1348) interacts with GTP; it reads GNTGSGKT. Serine 1444 carries the post-translational modification Phosphoserine. The region spanning 1546–1740 is the COR domain; it reads PVIDRKRLLQ…RMYWRQGIYL (195 aa). The region spanning 1879–2138 is the Protein kinase domain; sequence QAPEFLLGDG…FDILNSAELV (260 aa). 12 residues coordinate ATP: leucine 1885, aspartate 1887, glycine 1888, glycine 1891, valine 1893, alanine 1904, lysine 1906, methionine 1947, glutamate 1948, alanine 1950, serine 1954, and arginine 1957. The Proton acceptor role is filled by aspartate 1994. Positions 1998, 2001, 2016, and 2017 each coordinate ATP. Position 2098–2121 (2098–2121) interacts with GTP; sequence EYGCAPWPMVEKLIKQCLKENPQE. 7 WD repeats span residues 2139 to 2183, 2188 to 2228, 2233 to 2276, 2281 to 2327, 2333 to 2377, 2402 to 2438, and 2443 to 2497; these read CLTR…SFLD, GYTS…LVIN, KKRH…AIFE, KLKG…FSFS, QKLI…EVWD, KESK…LLLD, and RLIR…TVWD. 2295–2298 is a binding site for GTP; it reads NVST.

The protein belongs to the protein kinase superfamily. TKL Ser/Thr protein kinase family. As to quaternary structure, homodimer. Homotetramer; when activated by GTP-bound RAB29. Interacts with PRKN, PRDX3, and TPCN2. Interacts with VPS35. Interacts (via N-terminus) with RAB29; this interaction is direct and stimulates kinase activity. Interacts (via ROC domain) with SEC16A. Interacts with APP; interaction promotes phosphorylation of 'Thr-743' of APP. Interacts with MAPT. Interacts with RAB8A, RAB10, and RAB12. Interacts (via N-terminus) with RAB32. Interacts with YWHAG; this interaction is dependent on phosphorylation of Ser-910 and either Ser-935 or Ser-1444. Interacts with SFN; this interaction is dependent on phosphorylation of Ser-910 and/or Ser-935. Requires Mg(2+) as cofactor. Autophosphorylated at Ser-1292; autophosphorylation is stimulated by RAB29. Phosphorylation of Ser-910 and either Ser-935 or Ser-1444 facilitates interaction with YWHAG. Phosphorylation of Ser-910 and/or Ser-935 facilitates interaction with SFN. In terms of processing, ubiquitinated by TRIM1; undergoes 'Lys-48'-linked polyubiquitination leading to proteasomal degradation. Expressed in pyramidal neurons in all cortical laminae of the visual cortex, in neurons of the substantia nigra pars compacta and caudate putamen (at protein level). Expressed in neutrophils (at protein level). Expressed in the brain. Expressed throughout the adult brain, but at a lower level than in heart and liver. Also expressed in placenta, lung, skeletal muscle, kidney and pancreas. In the brain, expressed in the cerebellum, cerebral cortex, medulla, spinal cord occipital pole, frontal lobe, temporal lobe and putamen. Expression is particularly high in brain dopaminoceptive areas.

Its subcellular location is the cytoplasmic vesicle. It is found in the perikaryon. It localises to the golgi apparatus membrane. The protein localises to the cell projection. The protein resides in the axon. Its subcellular location is the dendrite. It is found in the endoplasmic reticulum membrane. It localises to the secretory vesicle. The protein localises to the synaptic vesicle membrane. The protein resides in the endosome. Its subcellular location is the lysosome. It is found in the mitochondrion outer membrane. It localises to the cytoplasm. The protein localises to the cytoskeleton. The protein resides in the phagosome. The catalysed reaction is L-threonyl-[protein] + ATP = O-phospho-L-threonyl-[protein] + ADP + H(+). It catalyses the reaction L-seryl-[protein] + ATP = O-phospho-L-seryl-[protein] + ADP + H(+). It carries out the reaction GTP + H2O = GDP + phosphate + H(+). With respect to regulation, kinase activity is regulated by the GTPase activity of the ROC domain. GTP-bound LRRK2 kinase activity is stimulated by RAB29. Phosphorylation of RAB10 'Thr-73' is stimulated by RAB29 and RAB32. Inhibited by small molecule inhibitor MLi-2. Its function is as follows. Serine/threonine-protein kinase which phosphorylates a broad range of proteins involved in multiple processes such as neuronal plasticity, innate immunity, autophagy, and vesicle trafficking. Is a key regulator of RAB GTPases by regulating the GTP/GDP exchange and interaction partners of RABs through phosphorylation. Phosphorylates RAB3A, RAB3B, RAB3C, RAB3D, RAB5A, RAB5B, RAB5C, RAB8A, RAB8B, RAB10, RAB12, RAB29, RAB35, and RAB43. Regulates the RAB3IP-catalyzed GDP/GTP exchange for RAB8A through the phosphorylation of 'Thr-72' on RAB8A. Inhibits the interaction between RAB8A and GDI1 and/or GDI2 by phosphorylating 'Thr-72' on RAB8A. Regulates primary ciliogenesis through phosphorylation of RAB8A and RAB10, which promotes SHH signaling in the brain. Together with RAB29, plays a role in the retrograde trafficking pathway for recycling proteins, such as mannose-6-phosphate receptor (M6PR), between lysosomes and the Golgi apparatus in a retromer-dependent manner. Regulates neuronal process morphology in the intact central nervous system (CNS). Plays a role in synaptic vesicle trafficking. Plays an important role in recruiting SEC16A to endoplasmic reticulum exit sites (ERES) and in regulating ER to Golgi vesicle-mediated transport and ERES organization. Positively regulates autophagy through a calcium-dependent activation of the CaMKK/AMPK signaling pathway. The process involves activation of nicotinic acid adenine dinucleotide phosphate (NAADP) receptors, increase in lysosomal pH, and calcium release from lysosomes. Phosphorylates PRDX3. By phosphorylating APP on 'Thr-743', which promotes the production and the nuclear translocation of the APP intracellular domain (AICD), regulates dopaminergic neuron apoptosis. Acts as a positive regulator of innate immunity by mediating phosphorylation of RIPK2 downstream of NOD1 and NOD2, thereby enhancing RIPK2 activation. Independent of its kinase activity, inhibits the proteasomal degradation of MAPT, thus promoting MAPT oligomerization and secretion. In addition, has GTPase activity via its Roc domain which regulates LRRK2 kinase activity. Recruited by RAB29/RAB7L1 to overloaded lysosomes where it phosphorylates and stabilizes RAB8A and RAB10 which promote lysosomal content release and suppress lysosomal enlargement through the EHBP1 and EHBP1L1 effector proteins. This chain is Leucine-rich repeat serine/threonine-protein kinase 2 (LRRK2), found in Homo sapiens (Human).